The chain runs to 510 residues: Putative serine protease K12H4.7 (510 aa).

The first 19 residues, 1–19, serve as a signal peptide directing secretion; that stretch reads MKTLLAVLLAACVLTQVLS. The active-site Charge relay system is the serine 187. Asparagine 234 is a glycosylation site (N-linked (GlcNAc...) asparagine). Residue aspartate 452 is the Charge relay system of the active site. Asparagine 473 is a glycosylation site (N-linked (GlcNAc...) asparagine). Histidine 477 acts as the Charge relay system in catalysis.

It belongs to the peptidase S28 family.

The chain is Putative serine protease K12H4.7 from Caenorhabditis elegans.